The sequence spans 181 residues: Adenine phosphoribosyltransferase (181 aa).

This sequence belongs to the purine/pyrimidine phosphoribosyltransferase family. As to quaternary structure, homodimer.

It localises to the cytoplasm. The enzyme catalyses AMP + diphosphate = 5-phospho-alpha-D-ribose 1-diphosphate + adenine. It functions in the pathway purine metabolism; AMP biosynthesis via salvage pathway; AMP from adenine: step 1/1. Functionally, catalyzes a salvage reaction resulting in the formation of AMP, that is energically less costly than de novo synthesis. The polypeptide is Adenine phosphoribosyltransferase (Psychromonas ingrahamii (strain DSM 17664 / CCUG 51855 / 37)).